A 287-amino-acid polypeptide reads, in one-letter code: Heavy metal-associated isoprenylated plant protein 4 (287 aa).

HMA domains lie at 14–80 (IITA…VELI) and 112–176 (IRTT…KHAE). A metal cation contacts are provided by Cys-25, Cys-28, Cys-123, and Cys-126. The stretch at 179–235 (SSKTEEEKKKEEEDKKKKEEEDKKKKEDEKKKEEEKKKEEENKKKEGEKKKEEVKVE) forms a coiled coil. The disordered stretch occupies residues 181-232 (KTEEEKKKEEEDKKKKEEEDKKKKEDEKKKEEEKKKEEENKKKEGEKKKEEV). Cys-284 is subject to Cysteine methyl ester. A lipid anchor (S-farnesyl cysteine) is attached at Cys-284. Residues 285–287 (RIV) constitute a propeptide, removed in mature form.

This sequence belongs to the HIPP family.

In terms of biological role, heavy-metal-binding protein. The sequence is that of Heavy metal-associated isoprenylated plant protein 4 from Arabidopsis thaliana (Mouse-ear cress).